The primary structure comprises 188 residues: Elongation factor P (188 aa).

The protein belongs to the elongation factor P family.

It is found in the cytoplasm. It functions in the pathway protein biosynthesis; polypeptide chain elongation. Its function is as follows. Involved in peptide bond synthesis. Stimulates efficient translation and peptide-bond synthesis on native or reconstituted 70S ribosomes in vitro. Probably functions indirectly by altering the affinity of the ribosome for aminoacyl-tRNA, thus increasing their reactivity as acceptors for peptidyl transferase. This is Elongation factor P from Stutzerimonas stutzeri (strain A1501) (Pseudomonas stutzeri).